The following is a 233-amino-acid chain: Protein-L-isoaspartate O-methyltransferase (233 aa).

Ser-83 is an active-site residue.

It belongs to the methyltransferase superfamily. L-isoaspartyl/D-aspartyl protein methyltransferase family.

It localises to the cytoplasm. It carries out the reaction [protein]-L-isoaspartate + S-adenosyl-L-methionine = [protein]-L-isoaspartate alpha-methyl ester + S-adenosyl-L-homocysteine. Its function is as follows. Catalyzes the methyl esterification of L-isoaspartyl residues in peptides and proteins that result from spontaneous decomposition of normal L-aspartyl and L-asparaginyl residues. It plays a role in the repair and/or degradation of damaged proteins. In Opitutus terrae (strain DSM 11246 / JCM 15787 / PB90-1), this protein is Protein-L-isoaspartate O-methyltransferase.